A 66-amino-acid chain; its full sequence is MSQTPTVNCPTCGAPVEFTPENKYRPFCSDRCKLIDLGAWASEEHKIPVAPDAEDELFSGDFDPRH.

Zn(2+) is bound by residues Cys9, Cys12, Cys28, and Cys32.

This sequence belongs to the DNA gyrase inhibitor YacG family. In terms of assembly, interacts with GyrB. Requires Zn(2+) as cofactor.

In terms of biological role, inhibits all the catalytic activities of DNA gyrase by preventing its interaction with DNA. Acts by binding directly to the C-terminal domain of GyrB, which probably disrupts DNA binding by the gyrase. This chain is DNA gyrase inhibitor YacG, found in Pseudomonas fluorescens (strain Pf0-1).